We begin with the raw amino-acid sequence, 510 residues long: Beta-glucosidase 12 (510 aa).

An N-terminal signal peptide occupies residues 1–24; that stretch reads MAAAGAMPGGLLLTFLLLAVVASG. Gln53 is an a beta-D-glucoside binding site. The N-linked (GlcNAc...) asparagine glycan is linked to Asn122. A beta-D-glucoside contacts are provided by residues His157 and 202-203; that span reads NE. Residue Glu203 is the Proton donor of the active site. 2 cysteine pairs are disulfide-bonded: Cys208-Cys243 and Cys222-Cys230. Asn229 is a glycosylation site (N-linked (GlcNAc...) asparagine). Tyr346 is an a beta-D-glucoside binding site. 2 N-linked (GlcNAc...) asparagine glycosylation sites follow: Asn361 and Asn371. An a beta-D-glucoside-binding site is contributed by Glu417. The Nucleophile role is filled by Glu417. Residue Asn425 is glycosylated (N-linked (GlcNAc...) asparagine). A beta-D-glucoside contacts are provided by residues Trp466, 473 to 474, and Phe482; that span reads EW.

Belongs to the glycosyl hydrolase 1 family.

The protein resides in the secreted. The catalysed reaction is Hydrolysis of terminal, non-reducing beta-D-glucosyl residues with release of beta-D-glucose.. Hydrolyzes p-nitrophenyl beta-D-glucoside, p-nitrophenyl beta-D-galactoside, p-nitrophenyl beta-D-xyloside, p-nitrophenyl beta-D-fucoside, p-nitrophenyl beta-L-arabinoside, cello-oligosaccharides and laminaribiose. The sequence is that of Beta-glucosidase 12 from Oryza sativa subsp. japonica (Rice).